A 31-amino-acid polypeptide reads, in one-letter code: Photosystem I reaction center subunit XII (31 aa).

Residues 7 to 26 form a helical membrane-spanning segment; sequence QIYIALLTALIPAFFALKLG.

Belongs to the PsaM family.

The protein resides in the plastid. It is found in the chloroplast thylakoid membrane. This is Photosystem I reaction center subunit XII from Euglena mutabilis.